A 257-amino-acid chain; its full sequence is Transcription factor LBX2 (257 aa).

Residues 1–43 are disordered; sequence MTSSSKDMKAGSVLQSSGEERRRGPLDQLPPPANSNKPLTPFS. The interval 1–46 is required for convergent extension movement and hypaxial myogenesis during gastrulation. Required for the formation of thick and thin myofilaments. Required for myod1 expression in the pectoral fin bud. Required for continuous expression of cxcl12a in the posterior lateral mesoderm at the tail bud stage and in adaxial cells at the 10-somite stage; sequence MTSSSKDMKAGSVLQSSGEERRRGPLDQLPPPANSNKPLTPFSIED. A DNA-binding region (homeobox) is located at residues 126–185; it reads RRKSRTAFTNHQIYELEKRFLYQKYLSPADRDQIAQQLGLTNAQVITWFQNRRAKLKRDL. Residues 206–257 are disordered; that stretch reads LVSMEDMEDAHGGSGPISPSLSPRAFPQSPSSSRGQTTDEFSEEDEEIEVDD. Residues 233–243 show a composition bias toward polar residues; it reads QSPSSSRGQTT. The segment covering 245-257 has biased composition (acidic residues); it reads EFSEEDEEIEVDD.

In terms of assembly, interacts (via N-terminus) with tle3a/gro2 (via C-terminus).

It localises to the nucleus. Transcription factor required in several developmental processes. Involved in axis formation during embryonic development by inhibiting tle3a/gro2 from binding to tcf7l1a, thereby facilitating ctnnb1-mediated transcription of canonical Wnt/CTNNB1 signaling target genes. Regulates convergent extension movements and hypaxial myogenesis during gastrulation by activating non-canonical Wnt signaling via wnt5b. Required for the formation of myofibrils and fusion of fast muscle precursor cells, potentially via transcriptional regulation of genes specific to thick and thin myofilaments. Regulates the migration of the posterior lateral line primordium during embryonic development, possibly via regulation of cxcl12a/sdf1a expression in the posterior lateral mesoderm, thereby modulating the deposition of neuromasts at correct intervals. The polypeptide is Transcription factor LBX2 (Danio rerio (Zebrafish)).